The following is a 193-amino-acid chain: Potassium-transporting ATPase KdpC subunit (193 aa).

Residues 7 to 27 form a helical membrane-spanning segment; sequence PLVVIFVVLTAVTGLAYPAVM.

This sequence belongs to the KdpC family. The system is composed of three essential subunits: KdpA, KdpB and KdpC.

The protein resides in the cell inner membrane. In terms of biological role, part of the high-affinity ATP-driven potassium transport (or Kdp) system, which catalyzes the hydrolysis of ATP coupled with the electrogenic transport of potassium into the cytoplasm. This subunit acts as a catalytic chaperone that increases the ATP-binding affinity of the ATP-hydrolyzing subunit KdpB by the formation of a transient KdpB/KdpC/ATP ternary complex. This is Potassium-transporting ATPase KdpC subunit from Burkholderia ambifaria (strain ATCC BAA-244 / DSM 16087 / CCUG 44356 / LMG 19182 / AMMD) (Burkholderia cepacia (strain AMMD)).